The primary structure comprises 451 residues: PTS system galactitol-specific EIIC component (451 aa).

Positions 6–435 (MRYILDLGPT…IYLTGIFMTW (430 aa)) constitute a PTS EIIC type-2 domain. The next 10 helical transmembrane spans lie at 9–29 (ILDL…SKIL), 41–61 (LHIG…LDSI), 92–112 (ASQI…AMLL), 138–158 (LATG…AFVY), 218–238 (FGPF…IGIL), 305–325 (AVVS…VCVP), 329–349 (VLPF…VAVH), 357–377 (LISG…TIGL), 392–412 (GMVA…IQVF), and 415–435 (QNIP…FMTW).

As to quaternary structure, forms a complex with one each of subunit of GatA, GatB and 2 subunits of GatC.

Its subcellular location is the cell inner membrane. Its function is as follows. The phosphoenolpyruvate-dependent sugar phosphotransferase system (PTS), a major carbohydrate active transport system, catalyzes the phosphorylation of incoming sugar substrates concomitant with their translocation across the cell membrane. The enzyme II complex composed of GatA, GatB and GatC is involved in galactitol transport. The chain is PTS system galactitol-specific EIIC component (gatC) from Escherichia coli O157:H7.